Consider the following 212-residue polypeptide: Uracil phosphoribosyltransferase (212 aa).

Residues R78, R103, and 130–138 (DPMLATGGS) each bind 5-phospho-alpha-D-ribose 1-diphosphate. Uracil is bound by residues I193 and 198 to 200 (GDA). Residue D199 participates in 5-phospho-alpha-D-ribose 1-diphosphate binding.

The protein belongs to the UPRTase family. Mg(2+) serves as cofactor.

It catalyses the reaction UMP + diphosphate = 5-phospho-alpha-D-ribose 1-diphosphate + uracil. Its pathway is pyrimidine metabolism; UMP biosynthesis via salvage pathway; UMP from uracil: step 1/1. Allosterically activated by GTP. Functionally, catalyzes the conversion of uracil and 5-phospho-alpha-D-ribose 1-diphosphate (PRPP) to UMP and diphosphate. The protein is Uracil phosphoribosyltransferase of Bordetella avium (strain 197N).